Consider the following 211-residue polypeptide: Redox-sensing transcriptional repressor Rex (211 aa).

Positions 17–56 form a DNA-binding region, H-T-H motif; the sequence is LYYRFVSSLKSKGIDRVNSKAISDALQIDSATIRRDFSYF. 91–96 contacts NAD(+); it reads GVGNLG.

Belongs to the transcriptional regulatory Rex family. As to quaternary structure, homodimer.

The protein localises to the cytoplasm. Modulates transcription in response to changes in cellular NADH/NAD(+) redox state. The chain is Redox-sensing transcriptional repressor Rex from Staphylococcus aureus (strain Mu3 / ATCC 700698).